A 469-amino-acid chain; its full sequence is 6-phospho-beta-galactosidase (469 aa).

Residues Q19, H116, N159, E160, and N297 each contribute to the D-galactose 6-phosphate site. Residue E160 is the Proton donor of the active site. The active-site Nucleophile is E375. Residues S428, W429, K435, and Y437 each coordinate D-galactose 6-phosphate.

The protein belongs to the glycosyl hydrolase 1 family.

The enzyme catalyses a 6-phospho-beta-D-galactoside + H2O = D-galactose 6-phosphate + an alcohol. Its pathway is carbohydrate metabolism; lactose degradation; D-galactose 6-phosphate and beta-D-glucose from lactose 6-phosphate: step 1/1. The sequence is that of 6-phospho-beta-galactosidase from Streptococcus equi subsp. zooepidemicus (strain H70).